The sequence spans 284 residues: Homoserine O-acetyltransferase 2 (284 aa).

The active-site Acyl-thioester intermediate is cysteine 133. Substrate is bound by residues lysine 154 and serine 178. The active-site Proton acceptor is histidine 220. Glutamate 222 is a catalytic residue. Substrate is bound at residue arginine 234.

The protein belongs to the MetA family.

It is found in the cytoplasm. It carries out the reaction L-homoserine + acetyl-CoA = O-acetyl-L-homoserine + CoA. It participates in amino-acid biosynthesis; L-methionine biosynthesis via de novo pathway; O-acetyl-L-homoserine from L-homoserine: step 1/1. Transfers an acetyl group from acetyl-CoA to L-homoserine, forming acetyl-L-homoserine. This chain is Homoserine O-acetyltransferase 2, found in Ilyobacter polytropus (strain ATCC 51220 / DSM 2926 / LMG 16218 / CuHBu1).